Here is a 1124-residue protein sequence, read N- to C-terminus: Probable leucine-rich repeat receptor-like protein kinase At2g33170 (1124 aa).

Positions 1 to 32 are cleaved as a signal peptide; sequence MGWWIFEFKKESKSMFVGVLFLLTLLVWTSES. Over 33–752 the chain is Extracellular; sequence LNSDGQFLLE…LKAGSARRGR (720 aa). N-linked (GlcNAc...) asparagine glycans are attached at residues asparagine 72, asparagine 96, and asparagine 131. LRR repeat units lie at residues 86-109, 110-132, 134-156, 158-180, 182-205, 206-228, 230-252, 254-277, 278-300, 302-325, 326-348, 350-371, 374-397, 398-420, 422-444, 446-468, 470-491, 494-516, 518-540, 542-564, 566-588, 590-613, 614-636, 638-661, 663-686, and 687-709; these read VVTS…GGLV, NLVY…IGNC, KLEV…INKL, QLRS…IGDL, NLEE…GNLN, KLTT…IGKC, NLKL…IGML, KLQE…GNLT, SLET…IGNM, SLKK…GKLS, KVME…LSKI, ELRL…ELSK, NLAK…QNLT, SMRQ…LGLY, PLWV…ICQQ, NLIL…VLRC, SLLQ…ELCK, NLSA…IGTC, KLQR…ISKL, NLVT…IANC, MLQR…LGSL, QLEI…GNLT, HLTE…LGLL, SLQI…IGNL, LLMY…ENLS, and SLLG…QIFQ. A glycan (N-linked (GlcNAc...) asparagine) is linked at asparagine 192. Asparagine 275 carries an N-linked (GlcNAc...) asparagine glycan. A glycan (N-linked (GlcNAc...) asparagine) is linked at asparagine 314. An N-linked (GlcNAc...) asparagine glycan is attached at asparagine 395. A glycan (N-linked (GlcNAc...) asparagine) is linked at asparagine 494. N-linked (GlcNAc...) asparagine glycosylation is present at asparagine 547. Asparagine 611 carries N-linked (GlcNAc...) asparagine glycosylation. Residues asparagine 644, asparagine 684, asparagine 692, asparagine 697, and asparagine 710 are each glycosylated (N-linked (GlcNAc...) asparagine). Residues 753–773 traverse the membrane as a helical segment; sequence IIIIVSSVIGGISLLLIAIVV. Topologically, residues 774–1124 are cytoplasmic; it reads HFLRNPVEPT…CSDLPPPAPP (351 aa). Phosphothreonine is present on residues threonine 808 and threonine 816. The region spanning 819–1100 is the Protein kinase domain; sequence FHDSYIVGRG…TMREVVLMLI (282 aa). ATP is bound by residues 825-833 and lysine 847; that span reads VGRGACGTV. Phosphotyrosine occurs at positions 901 and 939. The active-site Proton acceptor is aspartate 952. Position 986 is a phosphoserine (serine 986). 2 positions are modified to phosphotyrosine: tyrosine 994 and tyrosine 1001. Phosphothreonine is present on threonine 1002.

Belongs to the protein kinase superfamily. Ser/Thr protein kinase family.

Its subcellular location is the membrane. The catalysed reaction is L-seryl-[protein] + ATP = O-phospho-L-seryl-[protein] + ADP + H(+). The enzyme catalyses L-threonyl-[protein] + ATP = O-phospho-L-threonyl-[protein] + ADP + H(+). This is Probable leucine-rich repeat receptor-like protein kinase At2g33170 from Arabidopsis thaliana (Mouse-ear cress).